Consider the following 391-residue polypeptide: Succinate--CoA ligase [ADP-forming] subunit beta (391 aa).

The ATP-grasp domain maps to 9-248 (KDILRKFGVA…ISEEDPFEVE (240 aa)). Residues Lys50, 57-59 (GRG), Glu103, Met106, and Glu111 contribute to the ATP site. Positions 203 and 217 each coordinate Mg(2+). Substrate is bound by residues Asn268 and 325 to 327 (GIV).

This sequence belongs to the succinate/malate CoA ligase beta subunit family. Heterotetramer of two alpha and two beta subunits. It depends on Mg(2+) as a cofactor.

It carries out the reaction succinate + ATP + CoA = succinyl-CoA + ADP + phosphate. The catalysed reaction is GTP + succinate + CoA = succinyl-CoA + GDP + phosphate. Its pathway is carbohydrate metabolism; tricarboxylic acid cycle; succinate from succinyl-CoA (ligase route): step 1/1. Succinyl-CoA synthetase functions in the citric acid cycle (TCA), coupling the hydrolysis of succinyl-CoA to the synthesis of either ATP or GTP and thus represents the only step of substrate-level phosphorylation in the TCA. The beta subunit provides nucleotide specificity of the enzyme and binds the substrate succinate, while the binding sites for coenzyme A and phosphate are found in the alpha subunit. This Chlorobium luteolum (strain DSM 273 / BCRC 81028 / 2530) (Pelodictyon luteolum) protein is Succinate--CoA ligase [ADP-forming] subunit beta.